We begin with the raw amino-acid sequence, 314 residues long: Ribosomal protein L11 methyltransferase (314 aa).

S-adenosyl-L-methionine is bound by residues Thr152, Gly184, Asp206, and Asn248.

Belongs to the methyltransferase superfamily. PrmA family.

The protein localises to the cytoplasm. It catalyses the reaction L-lysyl-[protein] + 3 S-adenosyl-L-methionine = N(6),N(6),N(6)-trimethyl-L-lysyl-[protein] + 3 S-adenosyl-L-homocysteine + 3 H(+). In terms of biological role, methylates ribosomal protein L11. The polypeptide is Ribosomal protein L11 methyltransferase (Geotalea daltonii (strain DSM 22248 / JCM 15807 / FRC-32) (Geobacter daltonii)).